A 460-amino-acid polypeptide reads, in one-letter code: Phosphoglucomutase (460 aa).

Ser-103 serves as the catalytic Phosphoserine intermediate. Ser-103 contributes to the Mg(2+) binding site. Residues 103–104 (SH) and Lys-113 each bind substrate. Residues Asp-239, Asp-241, and Asp-243 each contribute to the Mg(2+) site. Substrate contacts are provided by residues 243–244 (DR), Thr-303, and 322–324 (EMS).

This sequence belongs to the phosphohexose mutase family. Mg(2+) is required as a cofactor.

It localises to the cytoplasm. The enzyme catalyses alpha-D-glucose 1-phosphate = alpha-D-glucose 6-phosphate. This enzyme participates in both the breakdown and synthesis of glucose. In Neisseria meningitidis serogroup A / serotype 4A (strain DSM 15465 / Z2491), this protein is Phosphoglucomutase (pgm).